Reading from the N-terminus, the 654-residue chain is tRNA 5-methylaminomethyl-2-thiouridine biosynthesis bifunctional protein MnmC (654 aa).

Positions 1–236 (MPTLLQHAQI…KWEVMSGAYV (236 aa)) are tRNA (mnm(5)s(2)U34)-methyltransferase. The interval 262–654 (IGAGLAGSSS…FGLRRLIRGK (393 aa)) is FAD-dependent cmnm(5)s(2)U34 oxidoreductase.

This sequence in the N-terminal section; belongs to the methyltransferase superfamily. tRNA (mnm(5)s(2)U34)-methyltransferase family. It in the C-terminal section; belongs to the DAO family. Requires FAD as cofactor.

Its subcellular location is the cytoplasm. The enzyme catalyses 5-aminomethyl-2-thiouridine(34) in tRNA + S-adenosyl-L-methionine = 5-methylaminomethyl-2-thiouridine(34) in tRNA + S-adenosyl-L-homocysteine + H(+). Functionally, catalyzes the last two steps in the biosynthesis of 5-methylaminomethyl-2-thiouridine (mnm(5)s(2)U) at the wobble position (U34) in tRNA. Catalyzes the FAD-dependent demodification of cmnm(5)s(2)U34 to nm(5)s(2)U34, followed by the transfer of a methyl group from S-adenosyl-L-methionine to nm(5)s(2)U34, to form mnm(5)s(2)U34. The protein is tRNA 5-methylaminomethyl-2-thiouridine biosynthesis bifunctional protein MnmC of Pseudomonas putida (strain ATCC 47054 / DSM 6125 / CFBP 8728 / NCIMB 11950 / KT2440).